Consider the following 215-residue polypeptide: Adenylate kinase (215 aa).

ATP is bound at residue 10-15; it reads GAGKGT. The tract at residues 30–59 is NMP; it reads STGDMLRAAIKAGTPLGLEAKKIIDEGGLV. AMP is bound by residues T31, R36, 57 to 59, 85 to 88, and Q92; these read GLV and GFPR. Residues 122–159 form an LID region; sequence GRRVHLASGRTYHVTYNPPKVEGKDDVTGEDLIQRDDD. Residues R123 and 132–133 each bind ATP; that span reads TY. 2 residues coordinate AMP: R156 and R167. Residue Q200 participates in ATP binding.

It belongs to the adenylate kinase family. In terms of assembly, monomer.

The protein localises to the cytoplasm. The enzyme catalyses AMP + ATP = 2 ADP. It functions in the pathway purine metabolism; AMP biosynthesis via salvage pathway; AMP from ADP: step 1/1. Its function is as follows. Catalyzes the reversible transfer of the terminal phosphate group between ATP and AMP. Plays an important role in cellular energy homeostasis and in adenine nucleotide metabolism. The chain is Adenylate kinase from Neisseria meningitidis serogroup C (strain 053442).